A 388-amino-acid polypeptide reads, in one-letter code: MNLHEYQAKELLKSYGLPIQEGLIAYSGDEAAAAFDKTPTDIAVIKAQVHAGGRGKAGGVKLVKTREEAKQVTDELIGTNLVTYQTDAAGQPVNFVLVAEDMYPVQTELYLGAVVDRSSRRVTFMASTEGGVEIEKVAEETPEKIFKVSIDPLVGLLPFQAREVAFKLGLEGKQISQFVKLMTGAYQAFVENDIDLLEINPLAVRENGEIVCVDGKISIDSNALYRLPKIAALQDKSQENERELKAAEFDLNYVALEGNIGCMVNGAGLAMATMDIIKLYGGKPANFLDVGGGATKDRVVEAFKIILEDSSVEGVLINIFGGIVRCDMIAEAIIAAIKEVDVKVPVVVRLEGNNAELGAKILEESGLKLISAQGLSDAAQKIVDAVKA.

The 237-residue stretch at 9–245 (KELLKSYGLP…KSQENERELK (237 aa)) folds into the ATP-grasp domain. Residues Lys-46, 53-55 (GRG), Glu-100, Tyr-103, and Glu-108 contribute to the ATP site. Mg(2+)-binding residues include Asn-200 and Asp-214. Residues Asn-265 and 322 to 324 (GIV) contribute to the substrate site.

This sequence belongs to the succinate/malate CoA ligase beta subunit family. As to quaternary structure, heterotetramer of two alpha and two beta subunits. Requires Mg(2+) as cofactor.

It catalyses the reaction succinate + ATP + CoA = succinyl-CoA + ADP + phosphate. The catalysed reaction is GTP + succinate + CoA = succinyl-CoA + GDP + phosphate. It functions in the pathway carbohydrate metabolism; tricarboxylic acid cycle; succinate from succinyl-CoA (ligase route): step 1/1. In terms of biological role, succinyl-CoA synthetase functions in the citric acid cycle (TCA), coupling the hydrolysis of succinyl-CoA to the synthesis of either ATP or GTP and thus represents the only step of substrate-level phosphorylation in the TCA. The beta subunit provides nucleotide specificity of the enzyme and binds the substrate succinate, while the binding sites for coenzyme A and phosphate are found in the alpha subunit. This Psychrobacter arcticus (strain DSM 17307 / VKM B-2377 / 273-4) protein is Succinate--CoA ligase [ADP-forming] subunit beta.